The chain runs to 180 residues: Translation initiation factor IF-3 (180 aa).

Belongs to the IF-3 family. As to quaternary structure, monomer.

Its subcellular location is the cytoplasm. IF-3 binds to the 30S ribosomal subunit and shifts the equilibrium between 70S ribosomes and their 50S and 30S subunits in favor of the free subunits, thus enhancing the availability of 30S subunits on which protein synthesis initiation begins. The chain is Translation initiation factor IF-3 from Mesoplasma florum (strain ATCC 33453 / NBRC 100688 / NCTC 11704 / L1) (Acholeplasma florum).